We begin with the raw amino-acid sequence, 305 residues long: UDP-N-acetylenolpyruvoylglucosamine reductase (305 aa).

The region spanning 37-202 (GIGGPARFLA…LSVTFNLEPK (166 aa)) is the FAD-binding PCMH-type domain. Arg-183 is an active-site residue.

This sequence belongs to the MurB family. Requires FAD as cofactor.

The protein resides in the cytoplasm. It catalyses the reaction UDP-N-acetyl-alpha-D-muramate + NADP(+) = UDP-N-acetyl-3-O-(1-carboxyvinyl)-alpha-D-glucosamine + NADPH + H(+). The protein operates within cell wall biogenesis; peptidoglycan biosynthesis. Functionally, cell wall formation. The polypeptide is UDP-N-acetylenolpyruvoylglucosamine reductase (Rhodopirellula baltica (strain DSM 10527 / NCIMB 13988 / SH1)).